Reading from the N-terminus, the 248-residue chain is NADH dehydrogenase [ubiquinone] flavoprotein 2, mitochondrial (248 aa).

The N-terminal 31 residues, 1 to 31 (MFSLALRARATGLAAQWGRHARNLHKTAVHN), are a transit peptide targeting the mitochondrion. An N6-acetyllysine modification is found at K60. [2Fe-2S] cluster contacts are provided by C134, C139, C175, and C179. Phosphotyrosine; by SRC is present on Y192. Residues 229–248 (GLTSLTEPPKGPGFGVQAGL) form a disordered region.

This sequence belongs to the complex I 24 kDa subunit family. As to quaternary structure, core subunit of respiratory chain NADH dehydrogenase (Complex I) which is composed of 45 different subunits. This is a component of the flavoprotein-sulfur (FP) fragment of the enzyme. [2Fe-2S] cluster is required as a cofactor.

It localises to the mitochondrion inner membrane. The enzyme catalyses a ubiquinone + NADH + 5 H(+)(in) = a ubiquinol + NAD(+) + 4 H(+)(out). In terms of biological role, core subunit of the mitochondrial membrane respiratory chain NADH dehydrogenase (Complex I) which catalyzes electron transfer from NADH through the respiratory chain, using ubiquinone as an electron acceptor. Parts of the peripheral arm of the enzyme, where the electrons from NADH are accepted by flavin mononucleotide (FMN) and then passed along a chain of iron-sulfur clusters by electron tunnelling to the final acceptor ubiquinone. Contains one iron-sulfur cluster. This is NADH dehydrogenase [ubiquinone] flavoprotein 2, mitochondrial from Mus musculus (Mouse).